A 124-amino-acid chain; its full sequence is MSLRIRLARGGAKKRPFYRIVVADSRSPRDGRFIEKLGTFDPMLPRDHERRVVLKDERVKYWLGVGALPSDRVARFLGLSGLTEARKVPEQTKQAQPKAKAQERLREAEEKARAAAEAAASAEG.

The interval 88-124 (VPEQTKQAQPKAKAQERLREAEEKARAAAEAAASAEG) is disordered. Residues 100–114 (KAQERLREAEEKARA) show a composition bias toward basic and acidic residues. Residues 115–124 (AAEAAASAEG) show a composition bias toward low complexity.

The protein belongs to the bacterial ribosomal protein bS16 family.

In Rhodospirillum rubrum (strain ATCC 11170 / ATH 1.1.1 / DSM 467 / LMG 4362 / NCIMB 8255 / S1), this protein is Small ribosomal subunit protein bS16.